The sequence spans 299 residues: Probable tyrosine phosphatase protein J4 (299 aa).

A Tyrosine-protein phosphatase domain is found at 16–289 (VEALDFLSFM…VYCYQALYVW (274 aa)). The active-site Phosphocysteine intermediate is the Cys230.

This sequence belongs to the protein-tyrosine phosphatase family.

It carries out the reaction O-phospho-L-tyrosyl-[protein] + H2O = L-tyrosyl-[protein] + phosphate. This chain is Probable tyrosine phosphatase protein J4 (J5), found in Microplitis demolitor bracovirus (isolate Webb) (MdBV).